A 593-amino-acid polypeptide reads, in one-letter code: ATP-dependent RNA helicase MRH4, mitochondrial (593 aa).

A mitochondrion-targeting transit peptide spans 1–106 (MFPLRAQSAS…QLRIFPTVRA (106 aa)). Residues 42–51 (GANGANRANG) are compositionally biased toward low complexity. The interval 42–63 (GANGANRANGTNSSQPESQSSK) is disordered. Over residues 52–63 (TNSSQPESQSSK) the composition is skewed to polar residues. A Q motif motif is present at residues 130 to 137 (VLKPTPIQ). A Helicase ATP-binding domain is found at 181 to 399 (INSLQKLKVF…NRIFPTDDSI (219 aa)). An ATP-binding site is contributed by 194-201 (AETGSGKT). The DEAD box motif lies at 347–350 (DEAD). In terms of domain architecture, Helicase C-terminal spans 433–593 (ALAQALYAIT…NAVKRGIQMG (161 aa)).

The protein belongs to the DEAD box helicase family. MRH4 subfamily.

The protein localises to the mitochondrion. It carries out the reaction ATP + H2O = ADP + phosphate + H(+). Its function is as follows. ATP-binding RNA helicase involved in mitochondrial RNA metabolism. Required for maintenance of mitochondrial DNA. This is ATP-dependent RNA helicase MRH4, mitochondrial (MRH4) from Scheffersomyces stipitis (strain ATCC 58785 / CBS 6054 / NBRC 10063 / NRRL Y-11545) (Yeast).